A 204-amino-acid chain; its full sequence is MKKYLNLTALLLVGISNVTWANAVNELQNRLNKIDVLSADYTQQVTDAQGKKIQQGSGKIQLKRPNLFRMDNETPQESQIIADGKTLWFYDPFVEQVTANWVEDTLSDTPFVLLTSNNPSHWQQYIVEQKSDTFIIKPKSKKSTIKQFNIRIEKDGVLKNFSTIENDGQSNLYILRKITNPALNDAIFTFTLPKGVEFDDQRKK.

The N-terminal stretch at 1–21 (MKKYLNLTALLLVGISNVTWA) is a signal peptide.

It belongs to the LolA family. In terms of assembly, monomer.

It is found in the periplasm. Its function is as follows. Participates in the translocation of lipoproteins from the inner membrane to the outer membrane. Only forms a complex with a lipoprotein if the residue after the N-terminal Cys is not an aspartate (The Asp acts as a targeting signal to indicate that the lipoprotein should stay in the inner membrane). The protein is Outer-membrane lipoprotein carrier protein of Histophilus somni (strain 129Pt) (Haemophilus somnus).